Here is a 532-residue protein sequence, read N- to C-terminus: Cyclin-L1 (532 aa).

2 cyclin-like regions span residues 94–196 and 209–293; these read ELIQ…RVLK and KIIV…ETLR. Threonine 331 carries the phosphothreonine modification. Residues 332–532 form a disordered region; the sequence is PALSTLGGFS…SRSGHGRHRR (201 aa). Phosphoserine is present on residues serine 341 and serine 344. Residues lysine 345 and lysine 353 each participate in a glycyl lysine isopeptide (Lys-Gly) (interchain with G-Cter in SUMO2) cross-link. A compositionally biased stretch (basic and acidic residues) spans 348–358; sequence SPREVKAEEKS. A phosphoserine mark is found at serine 358 and serine 361. A compositionally biased stretch (basic and acidic residues) spans 367–376; sequence VKKEPEDRQQ. A Glycyl lysine isopeptide (Lys-Gly) (interchain with G-Cter in SUMO2) cross-link involves residue lysine 368. Serine 380 is subject to Phosphoserine. Basic residues-rich tracts occupy residues 388–424, 444–458, 466–482, and 492–504; these read DSKR…RRSR, RRHH…KAKH, SNRH…RSQS, and KKHR…HRDR. The tract at residues 396–438 is RS; sequence RSASRSRSRTRSRSRSHSPRRHYNNRRSRSGTYSSRSRSRSRS. Serine 451 carries the post-translational modification Phosphoserine. A compositionally biased stretch (basic and acidic residues) spans 505–514; that stretch reads RERSRSFERS. Basic residues predominate over residues 515-532; it reads HKGKHHGGSRSGHGRHRR.

It belongs to the cyclin family. Cyclin L subfamily. In terms of assembly, interacts with POLR2A via its hyperphosphorylated C-terminal domain (CTD). Interacts with CDK11A, CDK11B, CDK12 and CDK13. May form a ternary complex with CDK11B and casein kinase II (CKII). Interacts with pre-mRNA-splicing factors, including at least SRSF1, SRSF2 and SRSF7/SLU7. As to expression, widely expressed (at protein level).

It is found in the nucleus speckle. The protein localises to the nucleus. The protein resides in the nucleoplasm. Its subcellular location is the cytoplasm. Functionally, involved in pre-mRNA splicing. Functions in association with cyclin-dependent kinases (CDKs). May play a role in the regulation of RNA polymerase II (pol II). Inhibited by the CDK-specific inhibitor CDKN1A/p21. This is Cyclin-L1 (Ccnl1) from Mus musculus (Mouse).